Consider the following 491-residue polypeptide: tRNA-2-methylthio-N(6)-dimethylallyladenosine synthase (491 aa).

In terms of domain architecture, MTTase N-terminal spans 54–172 (KTYHIKTFGC…ILNLLEQVIF (119 aa)). [4Fe-4S] cluster contacts are provided by cysteine 63, cysteine 99, cysteine 133, cysteine 209, cysteine 213, and cysteine 216. In terms of domain architecture, Radical SAM core spans 195 to 426 (RTNNLKGFVN…NEMVKTFSKK (232 aa)). Positions 429-491 (EKYVNKVLDV…RFTLNGKMID (63 aa)) constitute a TRAM domain.

Belongs to the methylthiotransferase family. MiaB subfamily. As to quaternary structure, monomer. The cofactor is [4Fe-4S] cluster.

It localises to the cytoplasm. The catalysed reaction is N(6)-dimethylallyladenosine(37) in tRNA + (sulfur carrier)-SH + AH2 + 2 S-adenosyl-L-methionine = 2-methylsulfanyl-N(6)-dimethylallyladenosine(37) in tRNA + (sulfur carrier)-H + 5'-deoxyadenosine + L-methionine + A + S-adenosyl-L-homocysteine + 2 H(+). Catalyzes the methylthiolation of N6-(dimethylallyl)adenosine (i(6)A), leading to the formation of 2-methylthio-N6-(dimethylallyl)adenosine (ms(2)i(6)A) at position 37 in tRNAs that read codons beginning with uridine. In Malacoplasma penetrans (strain HF-2) (Mycoplasma penetrans), this protein is tRNA-2-methylthio-N(6)-dimethylallyladenosine synthase.